Here is a 122-residue protein sequence, read N- to C-terminus: Acidic phospholipase A2 CTs-A3 (122 aa).

7 disulfide bridges follow: Cys26-Cys116, Cys28-Cys44, Cys43-Cys95, Cys49-Cys122, Cys50-Cys88, Cys57-Cys81, and Cys75-Cys86. Ca(2+) is bound by residues Tyr27, Gly29, and Gly31. Residue His47 is part of the active site. Residue Asp48 coordinates Ca(2+). The active site involves Asp89.

It depends on Ca(2+) as a cofactor. Expressed by the venom gland.

Its subcellular location is the secreted. The catalysed reaction is a 1,2-diacyl-sn-glycero-3-phosphocholine + H2O = a 1-acyl-sn-glycero-3-phosphocholine + a fatty acid + H(+). Functionally, snake venom phospholipase A2 (PLA2) that shows a moderate inhibition of ADP-induced human platelet aggregation when tested on platelet rich plasma. Exhibits moderate hydrolytic activities and prefers the anionic micelles (dPPC with deoxycholate) to the zwitterionic micelles (dPPC with Triton X-100). PLA2 catalyzes the calcium-dependent hydrolysis of the 2-acyl groups in 3-sn-phosphoglycerides. In Trimeresurus stejnegeri (Chinese green tree viper), this protein is Acidic phospholipase A2 CTs-A3.